The sequence spans 250 residues: GPI-anchored hemophore PGA10 (250 aa).

Positions 1 to 20 are cleaved as a signal peptide; it reads MMSFSLLSIVSIALAATVSA. Residues 26-137 enclose the CFEM domain; that stretch reads NAYTAYPSVA…DALAKAANAA (112 aa). 4 disulfides stabilise this stretch: C54/C94, C58/C89, C68/C75, and C77/C110. D72 is a binding site for heme. The segment at 165-219 is disordered; the sequence is STSHESKVAETSVAQQTASTEKSSAAETSRAKETSKAEESSKAEETSVAQSSSSA. Over residues 178 to 192 the composition is skewed to low complexity; it reads AQQTASTEKSSAAET. Over residues 193-209 the composition is skewed to basic and acidic residues; the sequence is SRAKETSKAEESSKAEE. Residues 210-219 are compositionally biased toward low complexity; that stretch reads TSVAQSSSSA. N230 is lipidated: GPI-anchor amidated asparagine. The propeptide at 231 to 250 is removed in mature form; sequence AGNMPVIAIGGVIAAFAALI.

It belongs to the RBT5 family. Post-translationally, the GPI-anchor is attached to the protein in the endoplasmic reticulum and serves to target the protein to the cell surface. There, the glucosamine-inositol phospholipid moiety is cleaved off and the GPI-modified mannoprotein is covalently attached via its lipidless GPI glycan remnant to the 1,6-beta-glucan of the outer cell wall layer. Mannosylated.

Its subcellular location is the secreted. The protein localises to the cell wall. It localises to the cell membrane. In terms of biological role, heme-binding protein involved in heme-iron utilization. The ability to acquire iron from host tissues is a major virulence factor of pathogenic microorganisms. Involved in biofilm formation. The polypeptide is GPI-anchored hemophore PGA10 (Candida albicans (strain SC5314 / ATCC MYA-2876) (Yeast)).